The following is a 190-amino-acid chain: METTCGLPVLPQKISVNFMLRETVDDLGLSKSVTFFLLNSPIMLRLFQRTQFQGSKTCPRVFSKSFHSLPFLRQELILKVEPLKRDNESEDVKRRRLVYQSRKRGILETDLLLSRFAKRYLPTMSVEEMEEYDDLLNELDWDIYYWAVKNYEVTPLPEKWKDSKILAKLQEMSANNEGEILRMPNLDDSP.

The protein belongs to the SDHAF2 family. In terms of assembly, interacts with the flavoprotein subunit within the SDH catalytic dimer.

Its subcellular location is the mitochondrion matrix. In terms of biological role, plays an essential role in the assembly of succinate dehydrogenase (SDH), an enzyme complex (also referred to as respiratory complex II) that is a component of both the tricarboxylic acid (TCA) cycle and the mitochondrial electron transport chain, and which couples the oxidation of succinate to fumarate with the reduction of ubiquinone (coenzyme Q) to ubiquinol. Required for flavinylation (covalent attachment of FAD) of the flavoprotein subunit of the SDH catalytic dimer. This is Succinate dehydrogenase assembly factor 2, mitochondrial from Komagataella phaffii (strain GS115 / ATCC 20864) (Yeast).